Consider the following 537-residue polypeptide: Mitochondria-eating protein (537 aa).

The tract at residues 1–270 (MAESLKKLAK…SHSRSRSHSR (270 aa)) is interaction with YWHAG/14-3-3 protein gamma. 6 positions are modified to phosphoserine: Ser13, Ser85, Ser123, Ser127, Ser154, and Ser157. The tract at residues 109–150 (SKNRDNSPDQDQHQSDNESFSETQPTQVQDDLAESGKSLEGA) is disordered. Basic and acidic residues predominate over residues 110-124 (KNRDNSPDQDQHQSD). Polar residues predominate over residues 125–137 (NESFSETQPTQVQ). 2 coiled-coil regions span residues 152 to 184 (NGST…ARHK) and 210 to 243 (QDVV…RSAR). Disordered stretches follow at residues 171–212 (QLKS…PQDV) and 233–291 (EKSG…RAKM). Positions 179–209 (EDARHKTSENRRSEALKSDHRSTKRTQDQRP) are enriched in basic and acidic residues. The segment covering 239–251 (GRSARSPSPSTGT) has biased composition (low complexity). Residues 252–269 (RSHRRGRSRSHSRSRSHS) are compositionally biased toward basic residues. Ser283, Ser285, and Ser508 each carry phosphoserine.

The protein belongs to the MIEAP family. As to quaternary structure, interacts (via coiled-coil domains) with BNIP3L (via BH3 domain). Interacts (via coiled-coil domains) with BNIP3 (via BH3 domain). Interacts with YWHAG/14-3-3 protein gamma; a protein that also plays a role in MALM. As to expression, in testis, expressed primarily in spermatids.

It is found in the cytoplasm. The protein resides in the cytosol. The protein localises to the mitochondrion outer membrane. It localises to the mitochondrion matrix. Key regulator of mitochondrial quality that mediates the repairing or degradation of unhealthy mitochondria in response to mitochondrial damage. Mediator of mitochondrial protein catabolic process (also named MALM) by mediating the degradation of damaged proteins inside mitochondria by promoting the accumulation in the mitochondrial matrix of hydrolases that are characteristic of the lysosomal lumen. Also involved in mitochondrion degradation of damaged mitochondria by promoting the formation of vacuole-like structures (named MIV), which engulf and degrade unhealthy mitochondria by accumulating lysosomes. The physical interaction of SPATA18/MIEAP, BNIP3 and BNIP3L/NIX at the mitochondrial outer membrane regulates the opening of a pore in the mitochondrial double membrane in order to mediate the translocation of lysosomal proteins from the cytoplasm to the mitochondrial matrix. Binds cardiolipin. May form molecular condensates (non-membrane-bounded organelles) within mitochondria that compartmentalize and promote cardiolipin metabolism. The polypeptide is Mitochondria-eating protein (Spata18) (Mus musculus (Mouse)).